Consider the following 297-residue polypeptide: Carbamate kinase (297 aa).

This sequence belongs to the carbamate kinase family.

The protein resides in the cytoplasm. The enzyme catalyses hydrogencarbonate + NH4(+) + ATP = carbamoyl phosphate + ADP + H2O + H(+). It catalyses the reaction carbamate + ATP = carbamoyl phosphate + ADP. The catalysed reaction is hydrogencarbonate + NH4(+) = carbamate + H2O + H(+). It functions in the pathway nitrogen metabolism; (S)-allantoin degradation. Its function is as follows. Kinase involved in the anaerobic nitrogen utilization via the assimilation of allantoin. Catalyzes the transfer of a phosphate group from carbamoyl phosphate to ADP to produce ATP and leave carbamate, which spontaneously hydrolyzes to ammonia and hydrogencarbonate. This chain is Carbamate kinase, found in Escherichia coli (strain K12).